Here is a 170-residue protein sequence, read N- to C-terminus: ATP synthase subunit b (170 aa).

The helical transmembrane segment at 4–24 (ILLLGLALAPVALFASQGAVE) threads the bilayer.

This sequence belongs to the ATPase B chain family. F-type ATPases have 2 components, F(1) - the catalytic core - and F(0) - the membrane proton channel. F(1) has five subunits: alpha(3), beta(3), gamma(1), delta(1), epsilon(1). F(0) has three main subunits: a(1), b(2) and c(10-14). The alpha and beta chains form an alternating ring which encloses part of the gamma chain. F(1) is attached to F(0) by a central stalk formed by the gamma and epsilon chains, while a peripheral stalk is formed by the delta and b chains.

The protein localises to the cell inner membrane. In terms of biological role, f(1)F(0) ATP synthase produces ATP from ADP in the presence of a proton or sodium gradient. F-type ATPases consist of two structural domains, F(1) containing the extramembraneous catalytic core and F(0) containing the membrane proton channel, linked together by a central stalk and a peripheral stalk. During catalysis, ATP synthesis in the catalytic domain of F(1) is coupled via a rotary mechanism of the central stalk subunits to proton translocation. Component of the F(0) channel, it forms part of the peripheral stalk, linking F(1) to F(0). The chain is ATP synthase subunit b from Aliarcobacter butzleri (strain RM4018) (Arcobacter butzleri).